A 148-amino-acid chain; its full sequence is 3-dehydroquinate dehydratase (148 aa).

Tyrosine 23 functions as the Proton acceptor in the catalytic mechanism. Substrate contacts are provided by asparagine 74, histidine 80, and aspartate 87. Catalysis depends on histidine 100, which acts as the Proton donor. Substrate is bound by residues 101–102 and arginine 111; that span reads IS.

The protein belongs to the type-II 3-dehydroquinase family. In terms of assembly, homododecamer.

It catalyses the reaction 3-dehydroquinate = 3-dehydroshikimate + H2O. It participates in metabolic intermediate biosynthesis; chorismate biosynthesis; chorismate from D-erythrose 4-phosphate and phosphoenolpyruvate: step 3/7. Functionally, catalyzes a trans-dehydration via an enolate intermediate. The polypeptide is 3-dehydroquinate dehydratase (Thermoanaerobacter pseudethanolicus (strain ATCC 33223 / 39E) (Clostridium thermohydrosulfuricum)).